The sequence spans 778 residues: Serine/threonine-protein kinase BRSK1 (778 aa).

Over residues 1-12 (MSSGAKEGGGGS) the composition is skewed to gly residues. The disordered stretch occupies residues 1–29 (MSSGAKEGGGGSPAYHLPHPHPHPPQHAQ). Residues 34-285 (YRLEKTLGKG…LEQIQKHPWY (252 aa)) form the Protein kinase domain. Residues 40–48 (LGKGQTGLV) and Lys63 contribute to the ATP site. Asp156 acts as the Proton acceptor in catalysis. Thr189 carries the post-translational modification Phosphothreonine; by LKB1. The 43-residue stretch at 314–356 (ELDPDVLESMASLGCFRDRERLHRELRSEEENQEKMIYYLLLD) folds into the UBA domain. Residues 362–383 (PSCEDQDLPPRNDVDPPRKRVD) show a composition bias toward basic and acidic residues. A disordered region spans residues 362 to 548 (PSCEDQDLPP…SPGGGVGGAA (187 aa)). A phosphoserine mark is found at Ser399, Ser443, Ser447, and Ser450. The segment covering 430–457 (SRSVSGASTGLSSSPLSSPRSPVFSFSP) has biased composition (low complexity). An omega-N-methylarginine mark is found at Arg466, Arg481, Arg484, and Arg498. The span at 491–508 (QPPPPSARSTPLPGPPGS) shows a compositional bias: pro residues. Phosphoserine is present on Ser508. A compositionally biased stretch (low complexity) spans 509 to 533 (PRSSGGTPLHSPLHTPRASPTGTPG). Position 525 is an omega-N-methylarginine (Arg525). 2 positions are modified to phosphothreonine: Thr529 and Thr535. Arg550 bears the Omega-N-methylarginine mark. Thr583 is subject to Phosphothreonine. A phosphoserine mark is found at Ser586, Ser587, and Ser601. Positions 719 to 778 (QPSVQALADEKNGAQTRPAGAPPRSLQPPPGRPDPELSSSPRRGPPKDKKLLATNGTPLP) are disordered.

This sequence belongs to the protein kinase superfamily. CAMK Ser/Thr protein kinase family. SNF1 subfamily. Mg(2+) serves as cofactor. In terms of processing, phosphorylated at Thr-189 by STK11/LKB1 in complex with STE20-related adapter-alpha (STRADA) pseudo kinase and CAB39. Not phosphorylated at Thr-189 by CaMKK2. In contrast, it is phosphorylated and activated by CaMKK1. May be inactivated via dephosphorylation of Thr-189 by PP2C. In terms of tissue distribution, widely expressed, with highest levels in brain and testis. Protein levels remain constant throughout the cell cycle.

The protein localises to the cytoplasm. Its subcellular location is the nucleus. It localises to the cytoskeleton. It is found in the microtubule organizing center. The protein resides in the centrosome. The protein localises to the synapse. Its subcellular location is the presynaptic active zone. It localises to the cytoplasmic vesicle. It is found in the secretory vesicle. The protein resides in the synaptic vesicle. The catalysed reaction is L-seryl-[protein] + ATP = O-phospho-L-seryl-[protein] + ADP + H(+). The enzyme catalyses L-threonyl-[protein] + ATP = O-phospho-L-threonyl-[protein] + ADP + H(+). It carries out the reaction L-seryl-[tau protein] + ATP = O-phospho-L-seryl-[tau protein] + ADP + H(+). It catalyses the reaction L-threonyl-[tau protein] + ATP = O-phospho-L-threonyl-[tau protein] + ADP + H(+). Its activity is regulated as follows. Activated by phosphorylation on Thr-189 by STK11/LKB1. Serine/threonine-protein kinase that plays a key role in polarization of neurons and centrosome duplication. Phosphorylates CDC25B, CDC25C, MAPT/TAU, RIMS1, TUBG1, TUBG2 and WEE1. Following phosphorylation and activation by STK11/LKB1, acts as a key regulator of polarization of cortical neurons, probably by mediating phosphorylation of microtubule-associated proteins such as MAPT/TAU at 'Thr-529' and 'Ser-579'. Also regulates neuron polarization by mediating phosphorylation of WEE1 at 'Ser-642' in postmitotic neurons, leading to down-regulate WEE1 activity in polarized neurons. In neurons, localizes to synaptic vesicles and plays a role in neurotransmitter release, possibly by phosphorylating RIMS1. Also acts as a positive regulator of centrosome duplication by mediating phosphorylation of gamma-tubulin (TUBG1 and TUBG2) at 'Ser-131', leading to translocation of gamma-tubulin and its associated proteins to the centrosome. Involved in the UV-induced DNA damage checkpoint response, probably by inhibiting CDK1 activity through phosphorylation and activation of WEE1, and inhibition of CDC25B and CDC25C. In Homo sapiens (Human), this protein is Serine/threonine-protein kinase BRSK1 (BRSK1).